We begin with the raw amino-acid sequence, 1054 residues long: MLQKREKVLLLRTFQGRTLRIVREHYLRPCVPCHSPLCPQPAACSHDGKLLSSDVTHYVIPDWKVVQDYLEILEFPELKGIIFMQTACQAVQHQRGRRQYNKLRNLLKDARHDCILFANEFQQCCYLPRERGESMEKWQTRSIYNAAVWYYHHCQDRMPIVMVTEDEEAIQQYGSETEGVFVITFKNYLDNFWPDLKAAHELCDSILQSRRERENESQESHGKEYPEHLPLEVLEAGIKSGRYIQGILNVNKHRAQIEAFVRLQGASSKDSDLVSDILIHGMKARNRSIHGDVVVVELLPKNEWKGRTVALCENDCDDKASGESPSEPMPTGRVVGILQKNWRDYVVTFPSKEEVQSQGKNAQKILVTPWDYRIPKIRISTQQAETLQDFRVVVRIDSWESTSVYPNGHFVRVLGRIGDLEGEIATILVENSISVIPFSEAQMCEMPVNTPESPWKVSPEEEQKRKDLRKSHLVFSIDPKGCEDVDDTLSVRTLNNGNLELGVHIADVTHFVAPNSYIDIEARTRATTYYLADRRYDMLPSVLSADLCSLLGGVDRYAVSIMWELDKASYEIKKVWYGRTIIRSAYKLFYEAAQELLDGNLSVVDDIPEFKDLDEKSRQAKLEELVWAIGKLTDIARHVRAKRDGCGALELEGVEVCVQLDDKKNIHDLIPKQPLEVHETVAECMILANHWVAKKIWESFPHQALLRQHPPPHQEFFSELRECAKAKGFFIDTRSNKTLADSLDNANDPHDPIVNRLLRSMATQAMSNALYFSTGSCAEEEFHHYGLALDKYTHFTSPIRRYSDIVVHRLLMAAISKDKKMEIKGNLFSNKDLEELCRHINNRNQAAQHSQKQSTELFQCMYFKDKDPATEERCISDGVIYSIRTNGVLLFIPRFGIKGAAYLKNKDGLVISCGPDSCSEWKPGSLQRFQNKITSTTTDGESVTFHLFDHVTVRISIQASRCHSDTIRLEIISNKPYKIPNTELIHQSSPLLKSELVKEVTKSVEEAQLAQEVKVNIIQEEYQEYRQTKGRSLYTLLEEIRDLALLDVSNNYGI.

Residues 236–309 form the CSD1 domain; the sequence is AGIKSGRYIQ…PKNEWKGRTV (74 aa). The region spanning 365 to 431 is the CSD2 domain; sequence ILVTPWDYRI…GEIATILVEN (67 aa). Residues 465-816 form the RNB domain; the sequence is RKDLRKSHLV…VHRLLMAAIS (352 aa). Residue Ser989 is modified to Phosphoserine.

Belongs to the RNR ribonuclease family. As to quaternary structure, component of the RNA exosome complex. The catalytically inactive RNA exosome core (Exo-9) complex is believed to associate with catalytic subunits EXOSC10, and DIS3 or DIS3L in cytoplasmic- and nuclear-specific RNA exosome complex forms. Requires Mg(2+) as cofactor.

Its subcellular location is the cytoplasm. The catalysed reaction is Exonucleolytic cleavage in the 3'- to 5'-direction to yield nucleoside 5'-phosphates.. Catalytic component of the RNA exosome complex which has 3'-&gt;5' exoribonuclease activity and participates in a multitude of cellular RNA processing and degradation events. In the cytoplasm, the RNA exosome complex is involved in general mRNA turnover and specifically degrades inherently unstable mRNAs containing AU-rich elements (AREs) within their 3' untranslated regions, and in RNA surveillance pathways, preventing translation of aberrant mRNAs. It seems to be involved in degradation of histone mRNA. The protein is DIS3-like exonuclease 1 (DIS3L) of Homo sapiens (Human).